The sequence spans 1365 residues: Nuclear pore complex protein Nup154 (1365 aa).

A required for binding to Nup93-1 and anchoring to the nuclear pore complex region spans residues 1-508 (MTLPQAQLDF…GTHIIEVLKM (508 aa)). The tract at residues 508 to 986 (MVDVLRQILL…KSINPLKGTA (479 aa)) is required for binding to chromatin.

Belongs to the non-repetitive/WGA-negative nucleoporin family. As to quaternary structure, interacts (via N-terminus) with Nup93-1. Interacts with Nup35. Interacts with cup.

The protein resides in the nucleus. It localises to the nuclear pore complex. The protein localises to the chromosome. Its subcellular location is the nucleus membrane. It is found in the cytoplasm. Component of the nuclear pore complex. Has a role in the organization of the inner nuclear membrane proteins at the nuclear envelope. In germ cells, plays a role in the nuclear localization of components of the dpp signaling pathways, such as Medea and phosphorylated Mad. Binds to chromatin, and together with Nup62 and Nup93-1, contributes to karyosome morphology and chromatin organization including attachment to the nuclear envelope in oocytes and nurse cells. Has a role in female fertility including egg chamber development; in nurse cells, has a role in the organization of F-actin in subcortical and cytoplasmic actin filaments important for the transfer of cytoplasm from nurse cells to the growing oocytes. Has a role in male spermatogenesis and fertility. Has a role in germ line cell proliferation. This is Nuclear pore complex protein Nup154 from Drosophila melanogaster (Fruit fly).